The primary structure comprises 143 residues: MAIERTFSIIKPNAVAKNVIGNIFARFEAAGFKIVGTKMLHLTVEQARGFYAEHDGKPFFDGLVEFMTSGPIVVSVLEGENAVQRHRDLLGATNPANALAGTLRADYADSLTENGTHGSDSVESAAREIAYFFGEGEVCPRTR.

Positions 11, 59, 87, 93, 104, and 114 each coordinate ATP. His117 acts as the Pros-phosphohistidine intermediate in catalysis.

The protein belongs to the NDK family. Homotetramer. Requires Mg(2+) as cofactor.

The protein resides in the cytoplasm. It catalyses the reaction a 2'-deoxyribonucleoside 5'-diphosphate + ATP = a 2'-deoxyribonucleoside 5'-triphosphate + ADP. The enzyme catalyses a ribonucleoside 5'-diphosphate + ATP = a ribonucleoside 5'-triphosphate + ADP. Its function is as follows. Major role in the synthesis of nucleoside triphosphates other than ATP. The ATP gamma phosphate is transferred to the NDP beta phosphate via a ping-pong mechanism, using a phosphorylated active-site intermediate. The protein is Nucleoside diphosphate kinase of Shigella boydii serotype 4 (strain Sb227).